The following is a 228-amino-acid chain: Ribulose-phosphate 3-epimerase (228 aa).

Ser-9 serves as a coordination point for substrate. Residues His-34, Asp-36, and His-70 each contribute to the a divalent metal cation site. The active-site Proton acceptor is Asp-36. Substrate is bound by residues His-70, Gly-146–Gly-149, Asp-179–Gly-181, and Gly-201–Ser-202. Position 179 (Asp-179) interacts with a divalent metal cation. Catalysis depends on Asp-179, which acts as the Proton donor.

This sequence belongs to the ribulose-phosphate 3-epimerase family. A divalent metal cation is required as a cofactor.

It carries out the reaction D-ribulose 5-phosphate = D-xylulose 5-phosphate. It functions in the pathway carbohydrate degradation. Catalyzes the reversible epimerization of D-ribulose 5-phosphate to D-xylulose 5-phosphate. The chain is Ribulose-phosphate 3-epimerase from Buchnera aphidicola subsp. Baizongia pistaciae (strain Bp).